A 99-amino-acid chain; its full sequence is NAD(P)H-quinone oxidoreductase subunit 4L, chloroplastic (99 aa).

Transmembrane regions (helical) follow at residues 1-21, 31-51, and 59-79; these read MFEQGLILSAYLLCVGFFGLI, MSLELIFNAITLNFITLSNLF, and IFTLFVIAVAAAEAATGLAIA.

Belongs to the complex I subunit 4L family. NDH is composed of at least 16 different subunits, 5 of which are encoded in the nucleus.

Its subcellular location is the plastid. It is found in the chloroplast thylakoid membrane. The enzyme catalyses a plastoquinone + NADH + (n+1) H(+)(in) = a plastoquinol + NAD(+) + n H(+)(out). It carries out the reaction a plastoquinone + NADPH + (n+1) H(+)(in) = a plastoquinol + NADP(+) + n H(+)(out). In terms of biological role, NDH shuttles electrons from NAD(P)H:plastoquinone, via FMN and iron-sulfur (Fe-S) centers, to quinones in the photosynthetic chain and possibly in a chloroplast respiratory chain. The immediate electron acceptor for the enzyme in this species is believed to be plastoquinone. Couples the redox reaction to proton translocation, and thus conserves the redox energy in a proton gradient. This chain is NAD(P)H-quinone oxidoreductase subunit 4L, chloroplastic, found in Adiantum capillus-veneris (Maidenhair fern).